The chain runs to 358 residues: Dual-specificity RNA methyltransferase RlmN (358 aa).

Glutamate 86 functions as the Proton acceptor in the catalytic mechanism. The Radical SAM core domain occupies arginine 105–aspartate 338. A disulfide bond links cysteine 112 and cysteine 343. Residues cysteine 119, cysteine 123, and cysteine 126 each contribute to the [4Fe-4S] cluster site. Residues glycine 169–glutamate 170, serine 201, serine 224–histidine 226, and asparagine 300 each bind S-adenosyl-L-methionine. Cysteine 343 (S-methylcysteine intermediate) is an active-site residue.

It belongs to the radical SAM superfamily. RlmN family. [4Fe-4S] cluster serves as cofactor.

The protein localises to the cytoplasm. The catalysed reaction is adenosine(2503) in 23S rRNA + 2 reduced [2Fe-2S]-[ferredoxin] + 2 S-adenosyl-L-methionine = 2-methyladenosine(2503) in 23S rRNA + 5'-deoxyadenosine + L-methionine + 2 oxidized [2Fe-2S]-[ferredoxin] + S-adenosyl-L-homocysteine. It catalyses the reaction adenosine(37) in tRNA + 2 reduced [2Fe-2S]-[ferredoxin] + 2 S-adenosyl-L-methionine = 2-methyladenosine(37) in tRNA + 5'-deoxyadenosine + L-methionine + 2 oxidized [2Fe-2S]-[ferredoxin] + S-adenosyl-L-homocysteine. Its function is as follows. Specifically methylates position 2 of adenine 2503 in 23S rRNA and position 2 of adenine 37 in tRNAs. m2A2503 modification seems to play a crucial role in the proofreading step occurring at the peptidyl transferase center and thus would serve to optimize ribosomal fidelity. This chain is Dual-specificity RNA methyltransferase RlmN, found in Campylobacter hominis (strain ATCC BAA-381 / DSM 21671 / CCUG 45161 / LMG 19568 / NCTC 13146 / CH001A).